Here is a 380-residue protein sequence, read N- to C-terminus: MASLRKTHPLLKIANDALVDLPTPSNISAWWNFGSLLGLCLISQILTGLFLAMHYTPDVESAFASVAHICRDVNFGWLIRNLHANGASFFFICIYFHIGRGLYYGSYLYKETWNIGVVLLLLVMMTAFVGYVLPWGQMSFWGATVITNLLSAVPYVGTTLVEWIWGGFSVDNATLTRFFAFHFLFPFVILAMTILHLLFLHETGSNNPIGLNSNADKISFHPYFSYKDLLGFAILLVALASLALFSPNLLGDPDNFTPANPMVTPPHIKPEWYFLFAYAILRSIPNKLGGVLALLASILVLMVVPFLHTSKQRTLTFRPVSQFLFWTLIADVAILTWIGGMPAEQPFIIIGQVASVLYFSLFLVFFPLAGWAENKILGWS.

Transmembrane regions (helical) follow at residues 33–53, 77–98, 113–133, and 178–198; these read FGSL…FLAM, WLIR…YFHI, WNIG…GYVL, and FFAF…LHLL. His-83 and His-97 together coordinate heme b. Heme b is bound by residues His-182 and His-196. An a ubiquinone-binding site is contributed by His-201. 4 consecutive transmembrane segments (helical) span residues 226 to 246, 288 to 308, 320 to 340, and 347 to 367; these read YKDL…ALFS, LGGV…PFLH, VSQF…WIGG, and FIII…VFFP.

This sequence belongs to the cytochrome b family. In terms of assembly, the cytochrome bc1 complex contains 3 respiratory subunits (MT-CYB, CYC1 and UQCRFS1), 2 core proteins (UQCRC1 and UQCRC2) and probably 6 low-molecular weight proteins. The cofactor is heme b.

The protein localises to the mitochondrion inner membrane. In terms of biological role, component of the ubiquinol-cytochrome c reductase complex (complex III or cytochrome b-c1 complex) that is part of the mitochondrial respiratory chain. The b-c1 complex mediates electron transfer from ubiquinol to cytochrome c. Contributes to the generation of a proton gradient across the mitochondrial membrane that is then used for ATP synthesis. The sequence is that of Cytochrome b (mt-cyb) from Sarda sarda (Atlantic bonito).